Here is a 229-residue protein sequence, read N- to C-terminus: 5'-methylthioadenosine/S-adenosylhomocysteine nucleosidase (229 aa).

Catalysis depends on E12, which acts as the Proton acceptor. Substrate contacts are provided by residues G78, I152, and 173 to 174; that span reads ME. The active-site Proton donor is the D197.

The protein belongs to the PNP/UDP phosphorylase family. MtnN subfamily.

The catalysed reaction is S-adenosyl-L-homocysteine + H2O = S-(5-deoxy-D-ribos-5-yl)-L-homocysteine + adenine. The enzyme catalyses S-methyl-5'-thioadenosine + H2O = 5-(methylsulfanyl)-D-ribose + adenine. It catalyses the reaction 5'-deoxyadenosine + H2O = 5-deoxy-D-ribose + adenine. The protein operates within amino-acid biosynthesis; L-methionine biosynthesis via salvage pathway; S-methyl-5-thio-alpha-D-ribose 1-phosphate from S-methyl-5'-thioadenosine (hydrolase route): step 1/2. Catalyzes the irreversible cleavage of the glycosidic bond in both 5'-methylthioadenosine (MTA) and S-adenosylhomocysteine (SAH/AdoHcy) to adenine and the corresponding thioribose, 5'-methylthioribose and S-ribosylhomocysteine, respectively. Also cleaves 5'-deoxyadenosine, a toxic by-product of radical S-adenosylmethionine (SAM) enzymes, into 5-deoxyribose and adenine. This Mannheimia succiniciproducens (strain KCTC 0769BP / MBEL55E) protein is 5'-methylthioadenosine/S-adenosylhomocysteine nucleosidase.